Reading from the N-terminus, the 920-residue chain is Phosphoenolpyruvate carboxylase (920 aa).

Residues H138 and K583 contribute to the active site.

Belongs to the PEPCase type 1 family. It depends on Mg(2+) as a cofactor.

It catalyses the reaction oxaloacetate + phosphate = phosphoenolpyruvate + hydrogencarbonate. In terms of biological role, forms oxaloacetate, a four-carbon dicarboxylic acid source for the tricarboxylic acid cycle. In Streptococcus pyogenes serotype M5 (strain Manfredo), this protein is Phosphoenolpyruvate carboxylase.